We begin with the raw amino-acid sequence, 65 residues long: UPF0434 protein Mmwyl1_2153 (65 aa).

Belongs to the UPF0434 family.

In Marinomonas sp. (strain MWYL1), this protein is UPF0434 protein Mmwyl1_2153.